Consider the following 89-residue polypeptide: Small ribosomal subunit protein uS15 (89 aa).

It belongs to the universal ribosomal protein uS15 family. In terms of assembly, part of the 30S ribosomal subunit. Forms a bridge to the 50S subunit in the 70S ribosome, contacting the 23S rRNA.

One of the primary rRNA binding proteins, it binds directly to 16S rRNA where it helps nucleate assembly of the platform of the 30S subunit by binding and bridging several RNA helices of the 16S rRNA. In terms of biological role, forms an intersubunit bridge (bridge B4) with the 23S rRNA of the 50S subunit in the ribosome. This chain is Small ribosomal subunit protein uS15, found in Edwardsiella ictaluri (strain 93-146).